We begin with the raw amino-acid sequence, 324 residues long: Probable pectinesterase A (324 aa).

An N-terminal signal peptide occupies residues M1–A19. A glycan (N-linked (GlcNAc...) asparagine) is linked at N27. Q142 is a substrate binding site. The Proton donor role is filled by D165. D186 (nucleophile) is an active-site residue. The N-linked (GlcNAc...) asparagine glycan is linked to N191. Substrate-binding residues include R246 and W248.

This sequence belongs to the pectinesterase family.

Its subcellular location is the secreted. It catalyses the reaction [(1-&gt;4)-alpha-D-galacturonosyl methyl ester](n) + n H2O = [(1-&gt;4)-alpha-D-galacturonosyl](n) + n methanol + n H(+). Its pathway is glycan metabolism; pectin degradation; 2-dehydro-3-deoxy-D-gluconate from pectin: step 1/5. In terms of biological role, involved in maceration and soft-rotting of plant tissue. This Neosartorya fischeri (strain ATCC 1020 / DSM 3700 / CBS 544.65 / FGSC A1164 / JCM 1740 / NRRL 181 / WB 181) (Aspergillus fischerianus) protein is Probable pectinesterase A (pmeA).